The sequence spans 155 residues: Small ribosomal subunit protein uS7 (155 aa).

The protein belongs to the universal ribosomal protein uS7 family. As to quaternary structure, part of the 30S ribosomal subunit. Contacts proteins S9 and S11.

One of the primary rRNA binding proteins, it binds directly to 16S rRNA where it nucleates assembly of the head domain of the 30S subunit. Is located at the subunit interface close to the decoding center, probably blocks exit of the E-site tRNA. The protein is Small ribosomal subunit protein uS7 of Thioalkalivibrio sulfidiphilus (strain HL-EbGR7).